The sequence spans 310 residues: tRNA dimethylallyltransferase (310 aa).

9 to 16 (GPTAVGKT) contributes to the ATP binding site. Residue 11-16 (TAVGKT) participates in substrate binding. Positions 34-37 (DSMQ) are interaction with substrate tRNA.

This sequence belongs to the IPP transferase family. In terms of assembly, monomer. Mg(2+) is required as a cofactor.

It carries out the reaction adenosine(37) in tRNA + dimethylallyl diphosphate = N(6)-dimethylallyladenosine(37) in tRNA + diphosphate. In terms of biological role, catalyzes the transfer of a dimethylallyl group onto the adenine at position 37 in tRNAs that read codons beginning with uridine, leading to the formation of N6-(dimethylallyl)adenosine (i(6)A). The chain is tRNA dimethylallyltransferase from Pediococcus pentosaceus (strain ATCC 25745 / CCUG 21536 / LMG 10740 / 183-1w).